Here is a 342-residue protein sequence, read N- to C-terminus: MIKIGVVGGTGYTGVELLRLLARHPEANLVAITSRGDAGMPVCDMFPSLRGRVDLRFVTPQDAALDRCDVVFFATPNGIAMQQARELVDAGVRLIDLAADFRIRDVGEWEKWYGMKHASPELVAEAVYGLPERNRERIRSARILANPGCYPTAVQLGFLPLVEAGVVDLSHLIADVKSGVSGAGRKAEVHTLFAEAADNFKAYAVAGHRHLPEIRQGLEAMAGQGVGLTFVPHLTPIIRGIHATLYARLSTDVNVQKLFEERYQNELFVDVLPAGSHPETRSVRASNLCRVAVHRPQGSDVVVVLSVIDNLVKGAAGQAVQCMNIMFELDESLGLDILPVSP.

Cys-149 is a catalytic residue.

It belongs to the NAGSA dehydrogenase family. Type 1 subfamily.

The protein localises to the cytoplasm. It carries out the reaction N-acetyl-L-glutamate 5-semialdehyde + phosphate + NADP(+) = N-acetyl-L-glutamyl 5-phosphate + NADPH + H(+). Its pathway is amino-acid biosynthesis; L-arginine biosynthesis; N(2)-acetyl-L-ornithine from L-glutamate: step 3/4. Its function is as follows. Catalyzes the NADPH-dependent reduction of N-acetyl-5-glutamyl phosphate to yield N-acetyl-L-glutamate 5-semialdehyde. In Aromatoleum aromaticum (strain DSM 19018 / LMG 30748 / EbN1) (Azoarcus sp. (strain EbN1)), this protein is N-acetyl-gamma-glutamyl-phosphate reductase.